Consider the following 214-residue polypeptide: Ribosomal RNA small subunit methyltransferase G (214 aa).

S-adenosyl-L-methionine is bound by residues G77, L82, 128-129, and R143; that span reads VE.

Belongs to the methyltransferase superfamily. RNA methyltransferase RsmG family.

The protein resides in the cytoplasm. It catalyses the reaction guanosine(527) in 16S rRNA + S-adenosyl-L-methionine = N(7)-methylguanosine(527) in 16S rRNA + S-adenosyl-L-homocysteine. Specifically methylates the N7 position of guanine in position 527 of 16S rRNA. This is Ribosomal RNA small subunit methyltransferase G from Nitrosococcus oceani (strain ATCC 19707 / BCRC 17464 / JCM 30415 / NCIMB 11848 / C-107).